The sequence spans 176 residues: MDLPGLIHDFLLVFLGLGLILGGLGVVLLANPIYSAFSLGLVFVCISLFYILSNSHFVAAAQLLIYVGAINVLIIFAVMFINGSEYSKDFHLWTVGDGVTSVVCTSLFVSLITTIPDTSWYGIIWTTKANQIIEQDLISNSQQIGIHLSTDFFIPFEFISIILLVALIGAIAVARQ.

Helical transmembrane passes span 10 to 30 (FLLV…VLLA), 32 to 52 (PIYS…FYIL), 61 to 81 (AQLL…VMFI), 92 to 112 (LWTV…VSLI), and 152 to 172 (FFIP…GAIA).

The protein belongs to the complex I subunit 6 family. NDH is composed of at least 16 different subunits, 5 of which are encoded in the nucleus.

The protein resides in the plastid. It is found in the chloroplast thylakoid membrane. It carries out the reaction a plastoquinone + NADH + (n+1) H(+)(in) = a plastoquinol + NAD(+) + n H(+)(out). It catalyses the reaction a plastoquinone + NADPH + (n+1) H(+)(in) = a plastoquinol + NADP(+) + n H(+)(out). Functionally, NDH shuttles electrons from NAD(P)H:plastoquinone, via FMN and iron-sulfur (Fe-S) centers, to quinones in the photosynthetic chain and possibly in a chloroplast respiratory chain. The immediate electron acceptor for the enzyme in this species is believed to be plastoquinone. Couples the redox reaction to proton translocation, and thus conserves the redox energy in a proton gradient. The sequence is that of NAD(P)H-quinone oxidoreductase subunit 6, chloroplastic (ndhG) from Helianthus annuus (Common sunflower).